A 73-amino-acid chain; its full sequence is Putative membrane protein insertion efficiency factor (73 aa).

Belongs to the UPF0161 family.

Its subcellular location is the cell inner membrane. In terms of biological role, could be involved in insertion of integral membrane proteins into the membrane. The polypeptide is Putative membrane protein insertion efficiency factor (Rickettsia bellii (strain RML369-C)).